Reading from the N-terminus, the 65-residue chain is Large ribosomal subunit protein uL29 (65 aa).

The protein belongs to the universal ribosomal protein uL29 family.

The sequence is that of Large ribosomal subunit protein uL29 from Bacteroides fragilis (strain ATCC 25285 / DSM 2151 / CCUG 4856 / JCM 11019 / LMG 10263 / NCTC 9343 / Onslow / VPI 2553 / EN-2).